Reading from the N-terminus, the 336-residue chain is 3-isopropylmalate dehydrogenase (336 aa).

Substrate is bound by residues Arg86, Arg96, Arg117, and Asp201. Residues Asp201, Asp225, and Asp229 each contribute to the Mg(2+) site. Residue 258-270 coordinates NAD(+); that stretch reads GAAFDIAGKGIAN.

The protein belongs to the isocitrate and isopropylmalate dehydrogenases family. Homotetramer. It depends on Mg(2+) as a cofactor. Mn(2+) serves as cofactor.

Its subcellular location is the cytoplasm. It catalyses the reaction (2R,3S)-3-isopropylmalate + NAD(+) = 4-methyl-2-oxopentanoate + CO2 + NADH. Its pathway is amino-acid biosynthesis; L-leucine biosynthesis; L-leucine from 3-methyl-2-oxobutanoate: step 3/4. Catalyzes the oxidation of 3-carboxy-2-hydroxy-4-methylpentanoate (3-isopropylmalate) to 3-carboxy-4-methyl-2-oxopentanoate. The product decarboxylates to 4-methyl-2 oxopentanoate. In Saccharolobus solfataricus (strain ATCC 35092 / DSM 1617 / JCM 11322 / P2) (Sulfolobus solfataricus), this protein is 3-isopropylmalate dehydrogenase (leuB).